The sequence spans 816 residues: Leucine--tRNA ligase (816 aa).

The 'HIGH' region motif lies at 40–51 (PYPSGSGLHVGH). The short motif at 576–580 (KMSKS) is the 'KMSKS' region element. Lys579 is a binding site for ATP.

Belongs to the class-I aminoacyl-tRNA synthetase family.

The protein resides in the cytoplasm. It carries out the reaction tRNA(Leu) + L-leucine + ATP = L-leucyl-tRNA(Leu) + AMP + diphosphate. The sequence is that of Leucine--tRNA ligase from Chlorobium phaeobacteroides (strain DSM 266 / SMG 266 / 2430).